A 430-amino-acid polypeptide reads, in one-letter code: MKQAFRVALGFLVLWASVLHAEVRIEITQGVDSARPIGVVPFKWMGPGTPPEEIGAIVGADLRNSGKFNPIDAARMPQQPSTAAEVTPAAWTALGIDAVVVGQVQPSADGSYVVSYQLVDTSGAAGSVLAQNQYKVTKQWLRYAAHTASDEVFEKLTGIKGAFRTRIAYVVQTNGGKFPHELRVSDYDGYNQFVVHRSPEPLMSPAWSPDGSKIAYVTFESGKSALVIQTLANGAIRQVASFPRHNGAPAFSPDGTKLAFALSKSGSLNLYVMDLGSGQISQVTDGRSNNTEPSWFPDSQNLAYTSDQGGRPQVYKVNINGGAPQRITWEGSQNQNADVSPDGKFLVLVSSNGGAQHIAKQDLVTGAVQVLTDTFLDETPSIAPNGTMVIYSSTQGLGAVLQLVSTDGRFKARLPATDGQVKFPAWSPYL.

The first 21 residues, 1–21 (MKQAFRVALGFLVLWASVLHA), serve as a signal peptide directing secretion.

It belongs to the TolB family. In terms of assembly, the Tol-Pal system is composed of five core proteins: the inner membrane proteins TolA, TolQ and TolR, the periplasmic protein TolB and the outer membrane protein Pal. They form a network linking the inner and outer membranes and the peptidoglycan layer.

It localises to the periplasm. Part of the Tol-Pal system, which plays a role in outer membrane invagination during cell division and is important for maintaining outer membrane integrity. TolB occupies a key intermediary position in the Tol-Pal system because it communicates directly with both membrane-embedded components, Pal in the outer membrane and TolA in the inner membrane. The sequence is that of Tol-Pal system protein TolB from Yersinia enterocolitica serotype O:8 / biotype 1B (strain NCTC 13174 / 8081).